The sequence spans 244 residues: Pyridoxine 5'-phosphate synthase (244 aa).

Asn-9 serves as a coordination point for 3-amino-2-oxopropyl phosphate. 11 to 12 (DH) serves as a coordination point for 1-deoxy-D-xylulose 5-phosphate. A 3-amino-2-oxopropyl phosphate-binding site is contributed by Arg-20. Catalysis depends on His-45, which acts as the Proton acceptor. 1-deoxy-D-xylulose 5-phosphate contacts are provided by Arg-47 and His-52. Glu-72 serves as the catalytic Proton acceptor. A 1-deoxy-D-xylulose 5-phosphate-binding site is contributed by Thr-102. His-193 (proton donor) is an active-site residue. Residues Gly-194 and 215-216 (GH) each bind 3-amino-2-oxopropyl phosphate.

It belongs to the PNP synthase family. As to quaternary structure, homooctamer; tetramer of dimers.

It localises to the cytoplasm. The catalysed reaction is 3-amino-2-oxopropyl phosphate + 1-deoxy-D-xylulose 5-phosphate = pyridoxine 5'-phosphate + phosphate + 2 H2O + H(+). The protein operates within cofactor biosynthesis; pyridoxine 5'-phosphate biosynthesis; pyridoxine 5'-phosphate from D-erythrose 4-phosphate: step 5/5. Functionally, catalyzes the complicated ring closure reaction between the two acyclic compounds 1-deoxy-D-xylulose-5-phosphate (DXP) and 3-amino-2-oxopropyl phosphate (1-amino-acetone-3-phosphate or AAP) to form pyridoxine 5'-phosphate (PNP) and inorganic phosphate. The polypeptide is Pyridoxine 5'-phosphate synthase (Blochmanniella pennsylvanica (strain BPEN)).